We begin with the raw amino-acid sequence, 693 residues long: Periplasmic alpha-galactoside-binding protein (693 aa).

A signal peptide spans 1-20 (MKTHRLNMTASLLIGISAFA).

It belongs to the bacterial solute-binding protein 5 family.

The protein localises to the periplasm. In terms of biological role, involved in the transport of alpha-galactosides. Required for the utilization of raffinose and melibiose. Probably acts as a periplasmic substrate-binding protein for a transport system. This is Periplasmic alpha-galactoside-binding protein from Rhizobium meliloti (strain 1021) (Ensifer meliloti).